The chain runs to 396 residues: tRNA-specific 2-thiouridylase MnmA (396 aa).

Residues glycine 42–serine 49 and methionine 68 each bind ATP. Residues asparagine 128 to aspartate 130 are interaction with target base in tRNA. The Nucleophile role is filled by cysteine 133. Cysteine 133 and cysteine 230 form a disulfide bridge. Glycine 158 serves as a coordination point for ATP. Positions lysine 180–glutamine 182 are interaction with tRNA. Residue cysteine 230 is the Cysteine persulfide intermediate of the active site. The segment at arginine 342–tyrosine 343 is interaction with tRNA.

This sequence belongs to the MnmA/TRMU family.

It localises to the cytoplasm. The catalysed reaction is S-sulfanyl-L-cysteinyl-[protein] + uridine(34) in tRNA + AH2 + ATP = 2-thiouridine(34) in tRNA + L-cysteinyl-[protein] + A + AMP + diphosphate + H(+). In terms of biological role, catalyzes the 2-thiolation of uridine at the wobble position (U34) of tRNA, leading to the formation of s(2)U34. This is tRNA-specific 2-thiouridylase MnmA from Pseudoalteromonas atlantica (strain T6c / ATCC BAA-1087).